The chain runs to 156 residues: 6,7-dimethyl-8-ribityllumazine synthase (156 aa).

5-amino-6-(D-ribitylamino)uracil-binding positions include phenylalanine 22, 57-59 (AYE), and 81-83 (TVI). Residue 86–87 (GT) coordinates (2S)-2-hydroxy-3-oxobutyl phosphate. The active-site Proton donor is the histidine 89. 5-amino-6-(D-ribitylamino)uracil is bound at residue phenylalanine 114. Arginine 128 contributes to the (2S)-2-hydroxy-3-oxobutyl phosphate binding site.

It belongs to the DMRL synthase family. As to quaternary structure, forms an icosahedral capsid composed of 60 subunits, arranged as a dodecamer of pentamers.

It catalyses the reaction (2S)-2-hydroxy-3-oxobutyl phosphate + 5-amino-6-(D-ribitylamino)uracil = 6,7-dimethyl-8-(1-D-ribityl)lumazine + phosphate + 2 H2O + H(+). Its pathway is cofactor biosynthesis; riboflavin biosynthesis; riboflavin from 2-hydroxy-3-oxobutyl phosphate and 5-amino-6-(D-ribitylamino)uracil: step 1/2. Catalyzes the formation of 6,7-dimethyl-8-ribityllumazine by condensation of 5-amino-6-(D-ribitylamino)uracil with 3,4-dihydroxy-2-butanone 4-phosphate. This is the penultimate step in the biosynthesis of riboflavin. The sequence is that of 6,7-dimethyl-8-ribityllumazine synthase from Serratia proteamaculans (strain 568).